A 426-amino-acid chain; its full sequence is Histidine--tRNA ligase (426 aa).

It belongs to the class-II aminoacyl-tRNA synthetase family.

It is found in the cytoplasm. The catalysed reaction is tRNA(His) + L-histidine + ATP = L-histidyl-tRNA(His) + AMP + diphosphate + H(+). This Saccharolobus solfataricus (strain ATCC 35092 / DSM 1617 / JCM 11322 / P2) (Sulfolobus solfataricus) protein is Histidine--tRNA ligase.